The sequence spans 124 residues: Large ribosomal subunit protein uL18 (124 aa).

The protein belongs to the universal ribosomal protein uL18 family. Part of the 50S ribosomal subunit; part of the 5S rRNA/L5/L18/L25 subcomplex. Contacts the 5S and 23S rRNAs.

Functionally, this is one of the proteins that bind and probably mediate the attachment of the 5S RNA into the large ribosomal subunit, where it forms part of the central protuberance. This is Large ribosomal subunit protein uL18 from Aquifex aeolicus (strain VF5).